The sequence spans 218 residues: Ras-related protein RabT2 (218 aa).

32-39 (GDYKTGKG) is a binding site for GTP. The short motif at 54 to 61 (VSSIGVDF) is the Effector region element. Residues 80–84 (DANSC) and 140–143 (NKCD) contribute to the GTP site. Position 215 is a cysteine methyl ester (Cys215). A lipid anchor (S-geranylgeranyl cysteine) is attached at Cys215. The propeptide at 216-218 (NIL) is removed in mature form.

It belongs to the small GTPase superfamily. Rab family.

It localises to the cell membrane. This chain is Ras-related protein RabT2 (rabT2), found in Dictyostelium discoideum (Social amoeba).